The sequence spans 246 residues: Pyridoxine 5'-phosphate synthase (246 aa).

3-amino-2-oxopropyl phosphate contacts are provided by N8 and R19. Residue H44 is the Proton acceptor of the active site. Residues R46 and H51 each contribute to the 1-deoxy-D-xylulose 5-phosphate site. The active-site Proton acceptor is the E76. T106 serves as a coordination point for 1-deoxy-D-xylulose 5-phosphate. The active-site Proton donor is the H198. 3-amino-2-oxopropyl phosphate-binding positions include D199 and 221 to 222; that span reads GH.

It belongs to the PNP synthase family. Homooctamer; tetramer of dimers.

The protein localises to the cytoplasm. It carries out the reaction 3-amino-2-oxopropyl phosphate + 1-deoxy-D-xylulose 5-phosphate = pyridoxine 5'-phosphate + phosphate + 2 H2O + H(+). It functions in the pathway cofactor biosynthesis; pyridoxine 5'-phosphate biosynthesis; pyridoxine 5'-phosphate from D-erythrose 4-phosphate: step 5/5. Its function is as follows. Catalyzes the complicated ring closure reaction between the two acyclic compounds 1-deoxy-D-xylulose-5-phosphate (DXP) and 3-amino-2-oxopropyl phosphate (1-amino-acetone-3-phosphate or AAP) to form pyridoxine 5'-phosphate (PNP) and inorganic phosphate. In Brucella abortus (strain S19), this protein is Pyridoxine 5'-phosphate synthase.